The chain runs to 459 residues: Hepatocyte nuclear factor 3-beta (459 aa).

The tract at residues 14–93 (DWSSYYAEPE…AGAMAGMSGS (80 aa)) is transactivation domain 1. The short motif at 106-113 (LSPSLSPL) is the Nuclear localization signal element. Phosphothreonine is present on threonine 156. Residues 159-252 (KPPYSYISLI…FENGCYLRRQ (94 aa)) constitute a DNA-binding region (fork-head). At serine 212 the chain carries Phosphoserine. The segment covering 268–281 (GAASSGGKKTAPGS) has biased composition (low complexity). Residues 268–366 (GAASSGGKKT…PGLPPEAHLK (99 aa)) form a disordered region. Phosphoserine is present on serine 284. Residues 295–311 (ASETPAGTESPHSSASP) are compositionally biased toward polar residues. Threonine 302 is modified (phosphothreonine). Residues serine 304, serine 307, serine 308, and serine 310 each carry the phosphoserine modification. Over residues 340–353 (PGQQQQAAAHLLGP) the composition is skewed to low complexity. Residues 362 to 459 (EAHLKPEHHY…VYSRPIMNSS (98 aa)) are transactivation domain 2. Residues serine 438 and serine 459 each carry the phosphoserine modification.

In terms of assembly, binds DNA as a monomer. Binds TLE1. Interacts with FOXA1 and FOXA3. Interacts with PRKDC. Interacts with AKT1. Interacts with TET1; this interaction may recruit TET1 to specific genomic loci to mediate their demethylation. Phosphorylation on Thr-156 abolishes binding to target promoters and subsequent transcription activation upon insulin stimulation. As to expression, restricted mainly to endoderm-derived tissues (lung, liver, stomach, and small intestine). Expressed in epididymis with region-specific expression pattern: no expression is observed in initial segment, low expression in proximal caput, gradiently higher levels of expression in middle and distal caput and highest level in corpus and cauda (at protein level).

Its subcellular location is the nucleus. It localises to the cytoplasm. Functionally, transcription factor that is involved in embryonic development, establishment of tissue-specific gene expression and regulation of gene expression in differentiated tissues. Is thought to act as a 'pioneer' factor opening the compacted chromatin for other proteins through interactions with nucleosomal core histones and thereby replacing linker histones at target enhancer and/or promoter sites. Binds DNA with the consensus sequence 5'-[AC]A[AT]T[AG]TT[GT][AG][CT]T[CT]-3'. In embryonic development is required for notochord formation. Involved in the development of multiple endoderm-derived organ systems such as the liver, pancreas and lungs; Foxa1 and Foxa2 seem to have at least in part redundant roles. FOXA1 and FOXA2 are essential for hepatic specification. FOXA1 and FOXA2 are required for morphogenesis and cell differentiation during formation of the lung. FOXA1 and FOXA2 are involved in bile duct formation; they positively regulate the binding glucocorticoid receptor/NR3C1 to the IL6 promoter. FOXA1 and FOXA2 regulate multiple phases of midbrain dopaminergic neuron development; they regulate expression of NEUROG2 at the beginning of mDA neurogenesis and of NR4A2 and EN1 in immature mDA neurons. Modulates the transcriptional activity of nuclear hormone receptors; inhibits AR-mediated transcription from the LCN5 promoter. Binds to fibrinogen beta promoter and is involved in IL6-induced fibrinogen beta transcriptional activation. Originally described as a transcription activator for a number of liver genes such as AFP, albumin, tyrosine aminotransferase, PEPCK, etc. Interacts with the cis-acting regulatory regions of these genes. Involved in glucose homeostasis; regulates the expression of genes important for glucose sensing in pancreatic beta-cells and glucose homeostasis. In pancreatic beta cells activates transcription of potassium channel subunits KCNJ11 and ABCC8. Involved in regulation of fat metabolism; activates transcriptional programs of lipid metabolism and ketogenesis at low insulin state. Involved in transcriptional regulation of MUC2 in the intestine. In Mus musculus (Mouse), this protein is Hepatocyte nuclear factor 3-beta (Foxa2).